A 359-amino-acid polypeptide reads, in one-letter code: Histidinol-phosphate aminotransferase (359 aa).

An N6-(pyridoxal phosphate)lysine modification is found at Lys-217.

It belongs to the class-II pyridoxal-phosphate-dependent aminotransferase family. Histidinol-phosphate aminotransferase subfamily. In terms of assembly, homodimer. Requires pyridoxal 5'-phosphate as cofactor.

It catalyses the reaction L-histidinol phosphate + 2-oxoglutarate = 3-(imidazol-4-yl)-2-oxopropyl phosphate + L-glutamate. It participates in amino-acid biosynthesis; L-histidine biosynthesis; L-histidine from 5-phospho-alpha-D-ribose 1-diphosphate: step 7/9. The polypeptide is Histidinol-phosphate aminotransferase (hisC) (Salmonella typhimurium (strain LT2 / SGSC1412 / ATCC 700720)).